The primary structure comprises 151 residues: FUN14 domain-containing protein 1A (151 aa).

The short motif at Y14–L17 is the YXXL element. 3 consecutive transmembrane segments (helical) span residues Y44 to F64, A71 to I91, and F130 to A150.

Belongs to the FUN14 family.

The protein resides in the mitochondrion outer membrane. In terms of biological role, acts as an activator of hypoxia-induced mitophagy, an important mechanism for mitochondrial quality control. The protein is FUN14 domain-containing protein 1A (fundc1-a) of Xenopus laevis (African clawed frog).